The primary structure comprises 264 residues: NAD kinase 1 (264 aa).

The Proton acceptor role is filled by Asp45. Residues 45 to 46, 122 to 123, Arg148, Asp150, 161 to 166, and Ala185 each bind NAD(+); these read DG, NE, and TAYNKS.

The protein belongs to the NAD kinase family. It depends on a divalent metal cation as a cofactor.

The protein localises to the cytoplasm. The enzyme catalyses NAD(+) + ATP = ADP + NADP(+) + H(+). In terms of biological role, involved in the regulation of the intracellular balance of NAD and NADP, and is a key enzyme in the biosynthesis of NADP. Catalyzes specifically the phosphorylation on 2'-hydroxyl of the adenosine moiety of NAD to yield NADP. This Listeria innocua serovar 6a (strain ATCC BAA-680 / CLIP 11262) protein is NAD kinase 1.